The chain runs to 368 residues: 1-deoxy-D-xylulose 5-phosphate reductoisomerase (368 aa).

NADPH-binding residues include threonine 7, glycine 8, serine 9, isoleucine 10, glycine 31, lysine 32, asparagine 33, and asparagine 113. Lysine 114 is a 1-deoxy-D-xylulose 5-phosphate binding site. Glutamate 115 is an NADPH binding site. Residue aspartate 133 participates in Mn(2+) binding. 1-deoxy-D-xylulose 5-phosphate contacts are provided by serine 134, glutamate 135, serine 158, and histidine 181. Mn(2+) is bound at residue glutamate 135. Glycine 187 contacts NADPH. 1-deoxy-D-xylulose 5-phosphate is bound by residues serine 194, asparagine 199, lysine 200, and glutamate 203. Glutamate 203 contributes to the Mn(2+) binding site.

Belongs to the DXR family. It depends on Mg(2+) as a cofactor. Mn(2+) is required as a cofactor.

The catalysed reaction is 2-C-methyl-D-erythritol 4-phosphate + NADP(+) = 1-deoxy-D-xylulose 5-phosphate + NADPH + H(+). It functions in the pathway isoprenoid biosynthesis; isopentenyl diphosphate biosynthesis via DXP pathway; isopentenyl diphosphate from 1-deoxy-D-xylulose 5-phosphate: step 1/6. Functionally, catalyzes the NADPH-dependent rearrangement and reduction of 1-deoxy-D-xylulose-5-phosphate (DXP) to 2-C-methyl-D-erythritol 4-phosphate (MEP). The sequence is that of 1-deoxy-D-xylulose 5-phosphate reductoisomerase from Helicobacter pylori (strain P12).